Consider the following 452-residue polypeptide: Ribosomal protein uS12 methylthiotransferase RimO (452 aa).

The region spanning 3–118 is the MTTase N-terminal domain; it reads GKIGFVSLGC…VMQAIHLHLP (116 aa). [4Fe-4S] cluster contacts are provided by Cys-12, Cys-48, Cys-77, Cys-149, Cys-153, and Cys-156. The Radical SAM core domain occupies 135–381; sequence LTPKHYAYLK…MAKAEDISIK (247 aa). The TRAM domain occupies 384 to 452; sequence AKKIGKRVQV…SQGHDLIAET (69 aa).

This sequence belongs to the methylthiotransferase family. RimO subfamily. The cofactor is [4Fe-4S] cluster.

It is found in the cytoplasm. The enzyme catalyses L-aspartate(89)-[ribosomal protein uS12]-hydrogen + (sulfur carrier)-SH + AH2 + 2 S-adenosyl-L-methionine = 3-methylsulfanyl-L-aspartate(89)-[ribosomal protein uS12]-hydrogen + (sulfur carrier)-H + 5'-deoxyadenosine + L-methionine + A + S-adenosyl-L-homocysteine + 2 H(+). In terms of biological role, catalyzes the methylthiolation of an aspartic acid residue of ribosomal protein uS12. The protein is Ribosomal protein uS12 methylthiotransferase RimO of Polynucleobacter asymbioticus (strain DSM 18221 / CIP 109841 / QLW-P1DMWA-1) (Polynucleobacter necessarius subsp. asymbioticus).